Reading from the N-terminus, the 520-residue chain is Cytochrome P450 4F8 (520 aa).

Residues 15–37 (AASPWLLLLVVGASWLLARILAW) traverse the membrane as a helical segment. Residue cysteine 468 coordinates heme.

This sequence belongs to the cytochrome P450 family. The cofactor is heme. In terms of tissue distribution, expressed in the epithelium of seminal vesicles, in renal cortex, in adult and fetal liver, in epidermis, in corneal epithelium, in sweat glands, hair follicles, epithelial linings of the ampulla of vas deferens and of the stomach and small intestine, as well as in the transitional epithelium of the bladder and ureter (at protein level). In the epidermis, expressed from the basal cell to the granular cell layers. In the corneal epithelium, expressed in all cell layers. Also detected in prostate. Up-regulated in the epidermis of psoriatic lesions.

It is found in the endoplasmic reticulum membrane. The protein localises to the microsome membrane. The enzyme catalyses an organic molecule + reduced [NADPH--hemoprotein reductase] + O2 = an alcohol + oxidized [NADPH--hemoprotein reductase] + H2O + H(+). The catalysed reaction is (5Z,8Z,11Z,14Z)-eicosatetraenoate + reduced [NADPH--hemoprotein reductase] + O2 = (18R)-hydroxy-(5Z,8Z,11Z,14Z)-eicosatetraenoate + oxidized [NADPH--hemoprotein reductase] + H2O + H(+). It catalyses the reaction (4Z,7Z,10Z,13Z,16Z)-docosapentaenoate + reduced [NADPH--hemoprotein reductase] + O2 = 20-hydroxy-(4Z,7Z,10Z,13Z,16Z)-docosapentaenoate + oxidized [NADPH--hemoprotein reductase] + H2O + H(+). It carries out the reaction prostaglandin H1 + reduced [NADPH--hemoprotein reductase] + O2 = 19-hydroxyprostaglandin H1 + oxidized [NADPH--hemoprotein reductase] + H2O + H(+). The enzyme catalyses prostaglandin H2 + reduced [NADPH--hemoprotein reductase] + O2 = 19-hydroxyprostaglandin H2 + oxidized [NADPH--hemoprotein reductase] + H2O + H(+). The catalysed reaction is prostaglandin I2 + reduced [NADPH--hemoprotein reductase] + O2 = 19-hydroxy-prostaglandin I2 + oxidized [NADPH--hemoprotein reductase] + H2O + H(+). It catalyses the reaction (4Z,7Z,10Z,13Z,16Z,19Z)-docosahexaenoate + reduced [NADPH--hemoprotein reductase] + O2 = 10,11-epoxy-(4Z,7Z,13Z,16Z,19Z)-docosapentaenoate + oxidized [NADPH--hemoprotein reductase] + H2O + H(+). It carries out the reaction (4Z,7Z,10Z,13Z,16Z,19Z)-docosahexaenoate + reduced [NADPH--hemoprotein reductase] + O2 = 13,14-epoxy-(4Z,7Z,10Z,16Z,19Z)-docosapentaenoate + oxidized [NADPH--hemoprotein reductase] + H2O + H(+). The enzyme catalyses (4Z,7Z,10Z,13Z,16Z,19Z)-docosahexaenoate + reduced [NADPH--hemoprotein reductase] + O2 = 16,17-epoxy-(4Z,7Z,10Z,13Z,19Z)-docosapentaenoate + oxidized [NADPH--hemoprotein reductase] + H2O + H(+). The catalysed reaction is (4Z,7Z,10Z,13Z,16Z,19Z)-docosahexaenoate + reduced [NADPH--hemoprotein reductase] + O2 = 19,20-epoxy-(4Z,7Z,10Z,13Z,16Z)-docosapentaenoate + oxidized [NADPH--hemoprotein reductase] + H2O + H(+). It catalyses the reaction (7Z,10Z,13Z,16Z,19Z)-docosapentaenoate + reduced [NADPH--hemoprotein reductase] + O2 = 10,11-epoxy-(7Z,13Z,16Z,19Z)-docosatetraenoate + oxidized [NADPH--hemoprotein reductase] + H2O + H(+). It carries out the reaction (7Z,10Z,13Z,16Z,19Z)-docosapentaenoate + reduced [NADPH--hemoprotein reductase] + O2 = 13,14-epoxy-(7Z,10Z,16Z,19Z)-docosatetraenoate + oxidized [NADPH--hemoprotein reductase] + H2O + H(+). The enzyme catalyses (7Z,10Z,13Z,16Z,19Z)-docosapentaenoate + reduced [NADPH--hemoprotein reductase] + O2 = 16,17-epoxy-(7Z,10Z,13Z,19Z)-docosatetraenoate + oxidized [NADPH--hemoprotein reductase] + H2O + H(+). The catalysed reaction is (7Z,10Z,13Z,16Z,19Z)-docosapentaenoate + reduced [NADPH--hemoprotein reductase] + O2 = 19,20-epoxy-(7Z,10Z,13Z,16Z)-docosatetraenoate + oxidized [NADPH--hemoprotein reductase] + H2O + H(+). Its pathway is lipid metabolism; fatty acid metabolism. Functionally, a cytochrome P450 monooxygenase involved in the metabolism of endogenous polyunsaturated fatty acids (PUFAs) and their oxygenated derivatives (oxylipins). Mechanistically, uses molecular oxygen inserting one oxygen atom into a substrate, and reducing the second into a water molecule, with two electrons provided by NADPH via cytochrome P450 reductase (CPR; NADPH-ferrihemoprotein reductase). Catalyzes the hydroxylation of carbon hydrogen bonds, with preference for omega-1 and omega-2 positions. Hydroxylates (5Z,8Z,11Z,14Z)-eicosatetraenoic acid (arachidonate) predominantly at omega-2 position to form (18R)-hydroxyeicosatetraenoic acid (18R-HETE). Exhibits omega-1 hydroxylase activity toward prostaglandin (PG) H1, PGH2 and PGI2. Catalyzes the epoxidation of double bonds of PUFAs, including docosahexaenoic and docosapentaenoic acids. Shows little activity against PGD2, PGE1, PGE2, PGF2alpha, and leukotriene B4. In Homo sapiens (Human), this protein is Cytochrome P450 4F8.